A 397-amino-acid polypeptide reads, in one-letter code: Phosphoglycerate kinase (397 aa).

Residues 23–25 (DFN), Arg38, 61–64 (HMGK), Arg122, and Arg155 contribute to the substrate site. ATP contacts are provided by residues Lys206, Gly296, Glu327, and 353–356 (GGDS).

The protein belongs to the phosphoglycerate kinase family. Monomer.

The protein localises to the cytoplasm. It catalyses the reaction (2R)-3-phosphoglycerate + ATP = (2R)-3-phospho-glyceroyl phosphate + ADP. It functions in the pathway carbohydrate degradation; glycolysis; pyruvate from D-glyceraldehyde 3-phosphate: step 2/5. The sequence is that of Phosphoglycerate kinase from Clostridium perfringens (strain ATCC 13124 / DSM 756 / JCM 1290 / NCIMB 6125 / NCTC 8237 / Type A).